Reading from the N-terminus, the 365-residue chain is Spermidine/putrescine import ATP-binding protein PotA (365 aa).

Positions 9–239 (IRLTNVTKSY…PINHFVANFI (231 aa)) constitute an ABC transporter domain. An ATP-binding site is contributed by 41–48 (GPSGCGKT).

Belongs to the ABC transporter superfamily. Spermidine/putrescine importer (TC 3.A.1.11.1) family. The complex is composed of two ATP-binding proteins (PotA), two transmembrane proteins (PotB and PotC) and a solute-binding protein (PotD).

It localises to the cell membrane. It carries out the reaction ATP + H2O + polyamine-[polyamine-binding protein]Side 1 = ADP + phosphate + polyamineSide 2 + [polyamine-binding protein]Side 1.. In terms of biological role, part of the ABC transporter complex PotABCD involved in spermidine/putrescine import. Responsible for energy coupling to the transport system. The sequence is that of Spermidine/putrescine import ATP-binding protein PotA from Lactiplantibacillus plantarum (strain ATCC BAA-793 / NCIMB 8826 / WCFS1) (Lactobacillus plantarum).